The primary structure comprises 72 residues: Gas vesicle protein A (72 aa).

Belongs to the gas vesicle GvpA family. The gas vesicle shell is 2 nm thick and consists of a single layer of this protein. It forms helical ribs nearly perpendicular to the long axis of the vesicle.

The protein resides in the gas vesicle shell. Functionally, gas vesicles are hollow, gas filled proteinaceous nanostructures found in some microorganisms. During planktonic growth they allow positioning of the organism at a favorable depth for light or nutrient acquisition. GvpA forms the protein shell. The chain is Gas vesicle protein A from Planktothrix agardhii (Oscillatoria agardhii).